Reading from the N-terminus, the 303-residue chain is UDP-N-acetylenolpyruvoylglucosamine reductase (303 aa).

The FAD-binding PCMH-type domain maps to 30-196 (IGGPADLLII…LEAVFKLKQD (167 aa)). Arginine 174 is an active-site residue. The active-site Proton donor is the serine 225. Glutamate 295 is a catalytic residue.

It belongs to the MurB family. FAD serves as cofactor.

Its subcellular location is the cytoplasm. The catalysed reaction is UDP-N-acetyl-alpha-D-muramate + NADP(+) = UDP-N-acetyl-3-O-(1-carboxyvinyl)-alpha-D-glucosamine + NADPH + H(+). It participates in cell wall biogenesis; peptidoglycan biosynthesis. Cell wall formation. The protein is UDP-N-acetylenolpyruvoylglucosamine reductase of Bacillus pumilus (strain SAFR-032).